Reading from the N-terminus, the 349-residue chain is Ureidoglycolate dehydrogenase (NAD(+)) (349 aa).

The Proton acceptor role is filled by H116. NAD(+)-binding positions include S140, 174-176 (DMA), K224, and 306-308 (GQD).

It belongs to the LDH2/MDH2 oxidoreductase family. Homodimer.

The protein localises to the cytoplasm. The catalysed reaction is (S)-ureidoglycolate + NAD(+) = N-carbamoyl-2-oxoglycine + NADH + H(+). It functions in the pathway nitrogen metabolism; (S)-allantoin degradation; oxalurate from (S)-ureidoglycolate: step 1/1. In terms of biological role, allD plays a pivotal role as a metabolic branch-point enzyme in nitrogen utilization via the assimilation of allantoin. It is able to utilize allantoin as a sole source of nitrogen under anaerobic conditions. Catalyzes the oxidation of ureidoglycolate to oxalurate. This Escherichia coli O157:H7 protein is Ureidoglycolate dehydrogenase (NAD(+)).